Consider the following 724-residue polypeptide: NAD(+) hydrolase SARM1 (724 aa).

Residues 1–27 (MVLTLLFSAYKLCRFFIMSGPRPGADR) constitute a mitochondrion transit peptide. Residues 60–100 (EVQGALERSLPELQQALSELKQASAAQAVGAGLAEVFQLVE) form an ARM 1 repeat. NAD(+) is bound by residues Trp103, Arg110, 149–157 (EQILVAENR), and 190–193 (HMFK). ARM repeat units lie at residues 114–153 (QGLC…QILV), 155–193 (ENRD…HMFK), 196–235 (EETC…NCAL), 237–280 (GGQT…LATN), 281–314 (KEVE…CLVD), 315–354 (ASDT…AEAA), and 359–402 (QGKT…EEVP). 2 SAM domains span residues 412–476 (WKEA…LKTF) and 486–548 (NLAD…MLHS). Phosphoserine is present on residues Ser548 and Ser558. Residues 560–703 (DTPDVFISYR…KIIRFLQGRP (144 aa)) form the TIR domain. Residues 569-570 (RR) and Glu599 each bind NAD(+). Residue Glu642 is part of the active site. The span at 703–717 (PSQDSSAGSDTSLEG) shows a compositional bias: polar residues. Positions 703–724 (PSQDSSAGSDTSLEGATSMGLP) are disordered.

This sequence belongs to the SARM1 family. In terms of assembly, homooctamer; forms an octameric ring via SAM domains. Interacts with TICAM1/TRIF and thereby interferes with TICAM1/TRIF function. Interacts with MAPK10/JNK3 and SDC2 (via cytoplasmic domain). Phosphorylation at Ser-548 by JNK kinases (MAPK8, MAPK9 and /or MAPK10) enhance the NAD(+) hydrolase (NADase) activity. Phosphorylation at Ser-548 and subsequent activation takes place in response to oxidative stress conditions and inhibits mitochondrial respiration. Phosphorylation at Ser-548 increases in response to cerebral ischemia/reperfusion (I/R) injury.

The protein resides in the cytoplasm. It is found in the cell projection. It localises to the axon. The protein localises to the dendrite. Its subcellular location is the synapse. The protein resides in the mitochondrion. It catalyses the reaction NAD(+) + H2O = ADP-D-ribose + nicotinamide + H(+). The catalysed reaction is NAD(+) = cyclic ADP-beta-D-ribose + nicotinamide + H(+). It carries out the reaction NADP(+) + H2O = ADP-D-ribose 2'-phosphate + nicotinamide + H(+). Its activity is regulated as follows. Autoinhibited: in the inactive state, the enzymatic TIR domain is held apart by the autoinhibiting ARM repeats. NAD(+)-binding to ARM repeats maintains an inactive state by promoting interaction between ARM repeats and the TIR domain, thereby facilitating inhibition of the enzymatic TIR domain. Following activation, possibly by nicotinamide mononucleotide (NMN), auto-inhibitory interactions are released, allowing self-association of the TIR domains and subsequent activation of the NAD(+) hydrolase (NADase) activity. Self-association of TIR domains is facilitated by the octamer of SAM domains. Functionally, NAD(+) hydrolase, which plays a key role in axonal degeneration following injury by regulating NAD(+) metabolism. Acts as a negative regulator of MYD88- and TRIF-dependent toll-like receptor signaling pathway by promoting Wallerian degeneration, an injury-induced form of programmed subcellular death which involves degeneration of an axon distal to the injury site. Wallerian degeneration is triggered by NAD(+) depletion: in response to injury, SARM1 is activated and catalyzes cleavage of NAD(+) into ADP-D-ribose (ADPR), cyclic ADPR (cADPR) and nicotinamide; NAD(+) cleavage promoting cytoskeletal degradation and axon destruction. Also able to hydrolyze NADP(+), but not other NAD(+)-related molecules. Can activate neuronal cell death in response to stress. Regulates dendritic arborization through the MAPK4-JNK pathway. Involved in innate immune response: inhibits both TICAM1/TRIF- and MYD88-dependent activation of JUN/AP-1, TRIF-dependent activation of NF-kappa-B and IRF3, and the phosphorylation of MAPK14/p38. In Rattus norvegicus (Rat), this protein is NAD(+) hydrolase SARM1.